The chain runs to 453 residues: Glutamyl-tRNA(Gln) amidotransferase subunit A (453 aa).

Active-site charge relay system residues include Lys55 and Ser130. Ser154 (acyl-ester intermediate) is an active-site residue.

This sequence belongs to the amidase family. GatA subfamily. In terms of assembly, heterotrimer of A, B and C subunits.

It catalyses the reaction L-glutamyl-tRNA(Gln) + L-glutamine + ATP + H2O = L-glutaminyl-tRNA(Gln) + L-glutamate + ADP + phosphate + H(+). In terms of biological role, allows the formation of correctly charged Gln-tRNA(Gln) through the transamidation of misacylated Glu-tRNA(Gln) in organisms which lack glutaminyl-tRNA synthetase. The reaction takes place in the presence of glutamine and ATP through an activated gamma-phospho-Glu-tRNA(Gln). This chain is Glutamyl-tRNA(Gln) amidotransferase subunit A, found in Aliarcobacter butzleri (strain RM4018) (Arcobacter butzleri).